Reading from the N-terminus, the 255-residue chain is Putative cysteine-rich repeat secretory protein 27 (255 aa).

The signal sequence occupies residues 1–26 (MISKFGSVHILAVVAIQLLIIPSVSS). Gnk2-homologous domains follow at residues 33–135 (YLHH…TINS) and 141–252 (YEND…LYPF).

Belongs to the cysteine-rich repeat secretory protein family.

It is found in the secreted. The polypeptide is Putative cysteine-rich repeat secretory protein 27 (CRRSP27) (Arabidopsis thaliana (Mouse-ear cress)).